The chain runs to 85 residues: Translation initiation factor IF-1 2 (85 aa).

The 72-residue stretch at 1–72 (MAKEELIEMQ…TKGRITFRHL (72 aa)) folds into the S1-like domain.

Belongs to the IF-1 family. As to quaternary structure, component of the 30S ribosomal translation pre-initiation complex which assembles on the 30S ribosome in the order IF-2 and IF-3, IF-1 and N-formylmethionyl-tRNA(fMet); mRNA recruitment can occur at any time during PIC assembly.

Its subcellular location is the cytoplasm. Functionally, one of the essential components for the initiation of protein synthesis. Stabilizes the binding of IF-2 and IF-3 on the 30S subunit to which N-formylmethionyl-tRNA(fMet) subsequently binds. Helps modulate mRNA selection, yielding the 30S pre-initiation complex (PIC). Upon addition of the 50S ribosomal subunit IF-1, IF-2 and IF-3 are released leaving the mature 70S translation initiation complex. This chain is Translation initiation factor IF-1 2, found in Paracidovorax citrulli (strain AAC00-1) (Acidovorax citrulli).